Reading from the N-terminus, the 1614-residue chain is Adenylate cyclase type 10 (1614 aa).

2 consecutive Guanylate cyclase domains span residues 42–179 and 293–418; these read VLMF…RLAQ and TIVF…ARMM. Aspartate 47 and isoleucine 48 together coordinate Mg(2+). 47-52 provides a ligand contact to ATP; that stretch reads DISGFT. Position 95 (lysine 95) interacts with hydrogencarbonate. Aspartate 99 provides a ligand contact to Mg(2+). The ATP site is built by aspartate 99 and lysine 144. Valine 167, arginine 176, and methionine 337 together coordinate hydrogencarbonate. Residues valine 406 and 412–416 contribute to the ATP site; that span reads NIAAR.

The protein belongs to the adenylyl cyclase class-4/guanylyl cyclase family. Mg(2+) is required as a cofactor. Requires Mn(2+) as cofactor. As to expression, expressed in testis.

It localises to the cell membrane. The protein resides in the cytoplasm. It is found in the cytoskeleton. Its subcellular location is the perinuclear region. The protein localises to the nucleus. It localises to the cell projection. The protein resides in the cilium. It is found in the mitochondrion. The enzyme catalyses ATP = 3',5'-cyclic AMP + diphosphate. With respect to regulation, activated by manganese or magnesium ions. In the presence of magnesium ions, the enzyme is activated by bicarbonate. Calcium mildly increases the enzyme activity, also in the presence of magnesium ions. Its function is as follows. Catalyzes the formation of the signaling molecule cAMP. May function as sensor that mediates responses to changes in cellular bicarbonate and CO(2) levels. Has a critical role in mammalian spermatogenesis by producing the cAMP which regulates cAMP-responsive nuclear factors indispensable for sperm maturation in the epididymis. Induces capacitation, the maturational process that sperm undergo prior to fertilization. Involved in ciliary beat regulation. In Mus musculus (Mouse), this protein is Adenylate cyclase type 10 (Adcy10).